Consider the following 551-residue polypeptide: Cytochrome c oxidase subunit 1 (551 aa).

The helical transmembrane segment at 34 to 54 (TLYLYSGVWGGLFGASLSLMI) threads the bilayer. Residue Gly62 coordinates Ca(2+). Residue His79 coordinates Fe(II)-heme a. A run of 6 helical transmembrane segments spans residues 81 to 101 (LMMI…NWLI), 126 to 146 (ALYL…GWTI), 163 to 183 (VLIV…INFA), 209 to 229 (TAVL…MILF), 252 to 272 (LFWF…FGVM), and 285 to 305 (VFGL…GCMV). Residue His258 participates in Cu cation binding. The 1'-histidyl-3'-tyrosine (His-Tyr) cross-link spans 258–262 (HPEVY). Tyr262 lines the O2 pocket. Cu cation is bound by residues His308 and His309. The next 2 helical transmembrane spans lie at 326–346 (ATMV…ATMA) and 356–376 (AYWS…GVLL). The Mg(2+) site is built by His386 and Asp387. 3 consecutive transmembrane segments (helical) span residues 391 to 411 (VVAH…FCGL), 432 to 452 (FMAM…LGLS), and 475 to 495 (GSAV…EALV). His394 is a heme a3 binding site. Residue His396 participates in Fe(II)-heme a binding.

It belongs to the heme-copper respiratory oxidase family. In terms of assembly, component of the cytochrome c oxidase (complex IV, CIV), a multisubunit enzyme composed of a catalytic core of 3 subunits and several supernumerary subunits. The complex exists as a monomer or a dimer and forms supercomplexes (SCs) in the inner mitochondrial membrane with ubiquinol-cytochrome c oxidoreductase (cytochrome b-c1 complex, complex III, CIII). Heme serves as cofactor. The cofactor is Cu cation.

Its subcellular location is the mitochondrion inner membrane. The enzyme catalyses 4 Fe(II)-[cytochrome c] + O2 + 8 H(+)(in) = 4 Fe(III)-[cytochrome c] + 2 H2O + 4 H(+)(out). It functions in the pathway energy metabolism; oxidative phosphorylation. Functionally, component of the cytochrome c oxidase, the last enzyme in the mitochondrial electron transport chain which drives oxidative phosphorylation. The respiratory chain contains 3 multisubunit complexes succinate dehydrogenase (complex II, CII), ubiquinol-cytochrome c oxidoreductase (cytochrome b-c1 complex, complex III, CIII) and cytochrome c oxidase (complex IV, CIV), that cooperate to transfer electrons derived from NADH and succinate to molecular oxygen, creating an electrochemical gradient over the inner membrane that drives transmembrane transport and the ATP synthase. Cytochrome c oxidase is the component of the respiratory chain that catalyzes the reduction of oxygen to water. Electrons originating from reduced cytochrome c in the intermembrane space (IMS) are transferred via the dinuclear copper A center (CU(A)) of subunit 2 and heme A of subunit 1 to the active site in subunit 1, a binuclear center (BNC) formed by heme A3 and copper B (CU(B)). The BNC reduces molecular oxygen to 2 water molecules using 4 electrons from cytochrome c in the IMS and 4 protons from the mitochondrial matrix. The chain is Cytochrome c oxidase subunit 1 (COI) from Mytilus edulis (Blue mussel).